Here is a 290-residue protein sequence, read N- to C-terminus: MSNWLVDKLIPSIMRSESQKSSVPEGLWHKCPSCEAVLYRPELEKTLDVCPKCDHHMRINARTRLDIFLDEDGREELGADLEPVDRLKFRDSKKYKDRLAAAQKDTGEKDALIAMSGKLQGMPVVACAFEFSFMGGSMGAIVGERFVRAANVALEKRCPLICFSASGGARMQEALISLMQMAKTSAVLARLREEGIPFVSVLTDPVYGGVSASLAMLGDVIVGEPKALIGFAGPRVIEQTVREKLPEGFQRSEFLLEHGAIDMIVHRAELRPRLANLLSAFTHSPSPVSA.

Residues 27–290 enclose the CoA carboxyltransferase N-terminal domain; that stretch reads LWHKCPSCEA…FTHSPSPVSA (264 aa). Zn(2+)-binding residues include C31, C34, C50, and C53. The C4-type zinc-finger motif lies at 31–53; it reads CPSCEAVLYRPELEKTLDVCPKC.

This sequence belongs to the AccD/PCCB family. Acetyl-CoA carboxylase is a heterohexamer composed of biotin carboxyl carrier protein (AccB), biotin carboxylase (AccC) and two subunits each of ACCase subunit alpha (AccA) and ACCase subunit beta (AccD). Zn(2+) is required as a cofactor.

The protein localises to the cytoplasm. The enzyme catalyses N(6)-carboxybiotinyl-L-lysyl-[protein] + acetyl-CoA = N(6)-biotinyl-L-lysyl-[protein] + malonyl-CoA. It participates in lipid metabolism; malonyl-CoA biosynthesis; malonyl-CoA from acetyl-CoA: step 1/1. In terms of biological role, component of the acetyl coenzyme A carboxylase (ACC) complex. Biotin carboxylase (BC) catalyzes the carboxylation of biotin on its carrier protein (BCCP) and then the CO(2) group is transferred by the transcarboxylase to acetyl-CoA to form malonyl-CoA. This is Acetyl-coenzyme A carboxylase carboxyl transferase subunit beta from Pseudomonas aeruginosa (strain UCBPP-PA14).